The primary structure comprises 308 residues: Pantothenate kinase (308 aa).

An ATP-binding site is contributed by 93-100 (GSVAVGKS).

Belongs to the prokaryotic pantothenate kinase family.

Its subcellular location is the cytoplasm. The catalysed reaction is (R)-pantothenate + ATP = (R)-4'-phosphopantothenate + ADP + H(+). The protein operates within cofactor biosynthesis; coenzyme A biosynthesis; CoA from (R)-pantothenate: step 1/5. This is Pantothenate kinase from Corynebacterium aurimucosum (strain ATCC 700975 / DSM 44827 / CIP 107346 / CN-1) (Corynebacterium nigricans).